Consider the following 128-residue polypeptide: Large ribosomal subunit protein bL19 (128 aa).

The protein belongs to the bacterial ribosomal protein bL19 family.

Its function is as follows. This protein is located at the 30S-50S ribosomal subunit interface and may play a role in the structure and function of the aminoacyl-tRNA binding site. This chain is Large ribosomal subunit protein bL19, found in Bradyrhizobium sp. (strain ORS 278).